The primary structure comprises 831 residues: MNLMKSSGMFTLTAIGSCRIVSPVKRAQPYFNFQANFKRIYGFTHTSSEALQQIRFILGLIDIPEKVRPFIFRPNVNYSNTDVHSRSDFYIIEISSQKKIMAYGFCLQINYLTRHFYEFFSQTERACMYWSLATQGNRHKLLAYLKDDPCFAGMSEDDRALLSNINVEQMDEHAIEQDMMEIVQLLGRDRVMFMTHVDAVTRAGTVILSRSRLIKNVDTIAARMDIPCVNPTNLMEKWGQKRALEKNGDDLTHYTDMFGDAIVAAIFKGVINNTNHHLDEGRQEKQDQIREITLSITKQLADGDIIAASQQLFAALRNQQQDPVLIQLRSVIFSHLGYYEQAYQDISDVEKIIGTTDSTLRCRLRSLHGLARWREALSTAEMMLSNEIEDEEVLTVAAGSADALQLFDKSYHYWKRVLLLNPETQSGWVNFLSSTQYFNDGNAFSEAFHAGIQSQRLNDTFMETALSLAIKFSDELIFMHALEQLLRHESEFALTVLSTIHDTGLVIRTAFCIKNMSYHQALRTSYKDKIHDVFEAWNNTALSLHSVDDFVSLSTSLAYSYSAFMVYPHSRISRFNNEVKMAWRDKLREMYEREDYENILAGAKIVWPLLKFDPVGTVYCARTLVNLGAWKDACTLAHMTLIRNSNITSLQSIMLRSIRHINNIPFLIDLIANVMSITLSFQNASMNKLFEKECRNVATRALKYVRQKKTEGRLDEALSVLISLKRIEPDVSRLMREYKQIIRLFNESRKDGGSTITSYEHLDYAKKLLVFDSENAYALKYAALNAMHLRDYTQALQYWQRLEKVNGPTEPVTRQISTCITALQKNTSGKS.

Its pathway is glycan metabolism; Vi-antigen biosynthesis. The protein operates within capsule biogenesis; capsule polysaccharide biosynthesis. Its function is as follows. May be required for maturation of the Vi polysaccharide. In Salmonella typhi, this protein is Vi polysaccharide biosynthesis protein TviD (tviD).